A 132-amino-acid chain; its full sequence is Small ribosomal subunit protein uS8 (132 aa).

It belongs to the universal ribosomal protein uS8 family. As to quaternary structure, part of the 30S ribosomal subunit. Contacts proteins S5 and S12.

In terms of biological role, one of the primary rRNA binding proteins, it binds directly to 16S rRNA central domain where it helps coordinate assembly of the platform of the 30S subunit. The polypeptide is Small ribosomal subunit protein uS8 (Mycobacterium marinum (strain ATCC BAA-535 / M)).